The primary structure comprises 497 residues: Iron-sulfur cluster assembly factor IBA57, mitochondrial (497 aa).

The transit peptide at 1-27 (MFISRRCRIKGFTLKNLLWFRSSSTRF) directs the protein to the mitochondrion. The interval 414 to 433 (PTLNPFTNKPPERTKRKQRP) is disordered.

Belongs to the GcvT family. CAF17/IBA57 subfamily. Interacts with CCR4, ISA1 and ISA2.

Its subcellular location is the mitochondrion matrix. Its function is as follows. Required for lysine and glutamate prototrophy and mitochondrial genome maintenance. Has a role in the maturation of mitochondrial aconitase-type and radical-SAM Fe/S proteins biotin synthase and lipoic acid synthase. The chain is Iron-sulfur cluster assembly factor IBA57, mitochondrial from Saccharomyces cerevisiae (strain ATCC 204508 / S288c) (Baker's yeast).